Reading from the N-terminus, the 1048-residue chain is Pleckstrin homology domain-containing family A member 6 (1048 aa).

Residues 1–22 are compositionally biased toward polar residues; the sequence is MSNKTGGKRPATTNSDIPNHNM. A disordered region spans residues 1–36; the sequence is MSNKTGGKRPATTNSDIPNHNMVSEVPPERPSVRAT. Residues 59 to 158 enclose the PH domain; that stretch reads PVTKAGWLFK…WIQAMGEAAR (100 aa). 2 disordered regions span residues 165 to 318 and 448 to 467; these read QKSV…MNQL and SLQPRSHSVPRSPSQGSYSR. Residues 201–233 show a composition bias toward basic and acidic residues; sequence PEPEAKTRGEGDGRGCEKAERRPERPEVKKEPP. Phosphoserine occurs at positions 247 and 251. Polar residues predominate over residues 267–290; it reads AQPNGWQYHSPSRPGSTAFPSQDG. A phosphoserine mark is found at Ser314, Ser459, Ser461, and Ser472. Polar residues predominate over residues 456–465; sequence VPRSPSQGSY. Tyr492 carries the post-translational modification Phosphotyrosine. A Phosphoserine modification is found at Ser591. The tract at residues 663-746 is disordered; sequence RKNNPSRGTD…HQTLPLDTPR (84 aa). Low complexity predominate over residues 687–711; it reads SSNSPASPLSSASLTSPLSPFSLVS. Over residues 712–721 the composition is skewed to polar residues; the sequence is GSQGSPTKPG. Thr744 is modified (phosphothreonine). Phosphoserine is present on Ser777. Position 784 is a phosphothreonine (Thr784). Residues 793-858 are disordered; that stretch reads ASGLTNGLSS…PAPDPSPRPA (66 aa). The span at 794-803 shows a compositional bias: polar residues; the sequence is SGLTNGLSSQ. Ser801 is modified (phosphoserine). The span at 815 to 827 shows a compositional bias: basic and acidic residues; that stretch reads GKVKMSVEEQIDR. Residues 828–842 are compositionally biased toward basic residues; the sequence is MRRHQSGSMREKRRS. Phosphoserine occurs at positions 848, 854, and 867. At Thr920 the chain carries Phosphothreonine. Phosphoserine is present on Ser940. Disordered stretches follow at residues 968–989 and 1005–1048; these read PIGEGDSVDVPQDSESQLQEQE and RGRM…TMRV. Residue Thr1015 is modified to Phosphothreonine. The segment covering 1016 to 1030 has biased composition (pro residues); that stretch reads PSPPTSPASPAPPAN. Ser1017 carries the post-translational modification Phosphoserine. Thr1020 is subject to Phosphothreonine. Phosphoserine is present on residues Ser1021 and Ser1024.

Highly expressed in heart, kidney and throughout the brain.

The chain is Pleckstrin homology domain-containing family A member 6 (PLEKHA6) from Homo sapiens (Human).